Consider the following 215-residue polypeptide: Proteasome subunit beta inpE (215 aa).

The protein belongs to the peptidase T1B family.

The protein resides in the cytoplasm. It is found in the nucleus. It carries out the reaction Cleavage of peptide bonds with very broad specificity.. Proteasome subunit beta type-6; part of the inp gene cluster that mediates the biosynthesis of fellutamide B, a mycotoxin that acts as a proteasome inhibitor. In the first step of fellutabmide B biosynthesis inpC activates 3-hydroxydodecanoic acid to generate 3-hydroxydodecanoyl-AMP that is then loaded onto the T0 domain of inpB. The 3-hydroxydodecanoyl-S-phosphopantetheinyl-T0 is sequentially extended with L-Asn and L-Gln by the two CAT modules of inpB. The linear lipodipeptide from inpB is then transferred onto inpA for the addition of the third amino acid, L-Leu. Reductive releasing of the lipotripeptide by the TE domain of inpA produces (2S)-fellutamide B. InpF might be involved in the release and transfer of the lipodipeptide from inpB to inpA. The inp cluster-encoded proteasome subunit inpE confers resistance to internally produced fellutamides. The MFS efflux transporter inpD may contribute to fellutamide resistance as well. This chain is Proteasome subunit beta inpE (inpE), found in Emericella nidulans (strain FGSC A4 / ATCC 38163 / CBS 112.46 / NRRL 194 / M139) (Aspergillus nidulans).